Consider the following 185-residue polypeptide: Orotate phosphoribosyltransferase (185 aa).

Residues Arg-99, Lys-100, Lys-103, and 125-133 (EDVTTTGGS) each bind 5-phospho-alpha-D-ribose 1-diphosphate. Orotate contacts are provided by Thr-129 and Arg-157.

It belongs to the purine/pyrimidine phosphoribosyltransferase family. PyrE subfamily. As to quaternary structure, homodimer. The cofactor is Mg(2+).

It carries out the reaction orotidine 5'-phosphate + diphosphate = orotate + 5-phospho-alpha-D-ribose 1-diphosphate. The protein operates within pyrimidine metabolism; UMP biosynthesis via de novo pathway; UMP from orotate: step 1/2. Its function is as follows. Catalyzes the transfer of a ribosyl phosphate group from 5-phosphoribose 1-diphosphate to orotate, leading to the formation of orotidine monophosphate (OMP). This chain is Orotate phosphoribosyltransferase, found in Methanococcus maripaludis (strain DSM 14266 / JCM 13030 / NBRC 101832 / S2 / LL).